The chain runs to 340 residues: Ketol-acid reductoisomerase (NADP(+)) (340 aa).

A KARI N-terminal Rossmann domain is found at 2–182; it reads ANIYYENHAD…GCTRAGVIET (181 aa). NADP(+) is bound by residues 25 to 28, Ser-51, Ser-53, and 83 to 86; these read FGSQ and DTAQ. The active site involves His-108. Gly-134 lines the NADP(+) pocket. The KARI C-terminal knotted domain maps to 183 to 328; it reads TFAEETETDL…RELRRMMPFV (146 aa). Positions 191, 195, 227, and 231 each coordinate Mg(2+). Ser-252 contributes to the substrate binding site.

The protein belongs to the ketol-acid reductoisomerase family. Mg(2+) is required as a cofactor.

It catalyses the reaction (2R)-2,3-dihydroxy-3-methylbutanoate + NADP(+) = (2S)-2-acetolactate + NADPH + H(+). The catalysed reaction is (2R,3R)-2,3-dihydroxy-3-methylpentanoate + NADP(+) = (S)-2-ethyl-2-hydroxy-3-oxobutanoate + NADPH + H(+). Its pathway is amino-acid biosynthesis; L-isoleucine biosynthesis; L-isoleucine from 2-oxobutanoate: step 2/4. The protein operates within amino-acid biosynthesis; L-valine biosynthesis; L-valine from pyruvate: step 2/4. Involved in the biosynthesis of branched-chain amino acids (BCAA). Catalyzes an alkyl-migration followed by a ketol-acid reduction of (S)-2-acetolactate (S2AL) to yield (R)-2,3-dihydroxy-isovalerate. In the isomerase reaction, S2AL is rearranged via a Mg-dependent methyl migration to produce 3-hydroxy-3-methyl-2-ketobutyrate (HMKB). In the reductase reaction, this 2-ketoacid undergoes a metal-dependent reduction by NADPH to yield (R)-2,3-dihydroxy-isovalerate. The sequence is that of Ketol-acid reductoisomerase (NADP(+)) from Roseiflexus castenholzii (strain DSM 13941 / HLO8).